The primary structure comprises 392 residues: tRNA(Met) cytidine acetate ligase (392 aa).

Residues valine 7 to histidine 20, glycine 101, asparagine 162, and arginine 187 to isoleucine 188 each bind ATP.

Belongs to the TmcAL family.

The protein localises to the cytoplasm. It catalyses the reaction cytidine(34) in elongator tRNA(Met) + acetate + ATP = N(4)-acetylcytidine(34) in elongator tRNA(Met) + AMP + diphosphate. Catalyzes the formation of N(4)-acetylcytidine (ac(4)C) at the wobble position of elongator tRNA(Met), using acetate and ATP as substrates. First activates an acetate ion to form acetyladenylate (Ac-AMP) and then transfers the acetyl group to tRNA to form ac(4)C34. In Listeria welshimeri serovar 6b (strain ATCC 35897 / DSM 20650 / CCUG 15529 / CIP 8149 / NCTC 11857 / SLCC 5334 / V8), this protein is tRNA(Met) cytidine acetate ligase.